A 333-amino-acid polypeptide reads, in one-letter code: Ketol-acid reductoisomerase (NADP(+)) (333 aa).

In terms of domain architecture, KARI N-terminal Rossmann spans 2–182 (AELFYDDDAD…GGTRAGVIKT (181 aa)). Residues 25-28 (YGSQ), S51, S53, and 83-86 (DPIQ) each bind NADP(+). H108 is an active-site residue. G134 contacts NADP(+). Residues 183 to 328 (TFTEETETDL…RELRKLMSWV (146 aa)) form the KARI C-terminal knotted domain. Residues D191, E195, E227, and E231 each coordinate Mg(2+). S252 contributes to the substrate binding site.

Belongs to the ketol-acid reductoisomerase family. The cofactor is Mg(2+).

It carries out the reaction (2R)-2,3-dihydroxy-3-methylbutanoate + NADP(+) = (2S)-2-acetolactate + NADPH + H(+). The catalysed reaction is (2R,3R)-2,3-dihydroxy-3-methylpentanoate + NADP(+) = (S)-2-ethyl-2-hydroxy-3-oxobutanoate + NADPH + H(+). The protein operates within amino-acid biosynthesis; L-isoleucine biosynthesis; L-isoleucine from 2-oxobutanoate: step 2/4. It functions in the pathway amino-acid biosynthesis; L-valine biosynthesis; L-valine from pyruvate: step 2/4. In terms of biological role, involved in the biosynthesis of branched-chain amino acids (BCAA). Catalyzes an alkyl-migration followed by a ketol-acid reduction of (S)-2-acetolactate (S2AL) to yield (R)-2,3-dihydroxy-isovalerate. In the isomerase reaction, S2AL is rearranged via a Mg-dependent methyl migration to produce 3-hydroxy-3-methyl-2-ketobutyrate (HMKB). In the reductase reaction, this 2-ketoacid undergoes a metal-dependent reduction by NADPH to yield (R)-2,3-dihydroxy-isovalerate. This is Ketol-acid reductoisomerase (NADP(+)) from Streptomyces griseus subsp. griseus (strain JCM 4626 / CBS 651.72 / NBRC 13350 / KCC S-0626 / ISP 5235).